The primary structure comprises 363 residues: MTHQYPALTTEQKRELQDIAQRIVAPGKGILAADESTGSMAKRLNPIGVENTEENRRLYRQLLFTADERMDKCIGGVIFFHETLYQKADDGTPFAKMIKDRGIVVGIKVDKGVVPLAGTNGETTTQGLDGLSERCAQYKKDGADFAKWRSVLKISETSPSELAIMENANVLARYASICQQNGIVPIVEPEILPDGDHDLKRCQYVTEKVLAACYKALSDHHVYLEGTLLKPNMVTAGHSCPTKFSNQEIAMATVTALRRTVPPAVTGVTFLSGGQSEEEASINLNAINNCPLTKPWALTFSYGRALQASALSAWRGVKENEKAATEEFLKRAEANGLAAQGKYVSSGMDGSAGQSLYVANHAY.

The substrate site is built by arginine 56 and lysine 147. The active-site Schiff-base intermediate with dihydroxyacetone-P is the lysine 230.

It belongs to the class I fructose-bisphosphate aldolase family. In terms of assembly, homotetramer. Expressed in brain but not in liver or muscle.

It carries out the reaction beta-D-fructose 1,6-bisphosphate = D-glyceraldehyde 3-phosphate + dihydroxyacetone phosphate. It participates in carbohydrate degradation; glycolysis; D-glyceraldehyde 3-phosphate and glycerone phosphate from D-glucose: step 4/4. This chain is Fructose-bisphosphate aldolase C (aldoc), found in Carassius auratus (Goldfish).